Consider the following 298-residue polypeptide: Tyrosine recombinase XerC (298 aa).

The region spanning 1-85 (MKPIAAFQEY…SLRSFYRYLT (85 aa)) is the Core-binding (CB) domain. The region spanning 106–291 (HLPQFFYEAE…TMAHLKNEYM (186 aa)) is the Tyr recombinase domain. Residues arginine 146, lysine 170, histidine 243, arginine 246, and histidine 269 contribute to the active site. Tyrosine 278 (O-(3'-phospho-DNA)-tyrosine intermediate) is an active-site residue.

It belongs to the 'phage' integrase family. XerC subfamily. Forms a cyclic heterotetrameric complex composed of two molecules of XerC and two molecules of XerD.

The protein localises to the cytoplasm. Functionally, site-specific tyrosine recombinase, which acts by catalyzing the cutting and rejoining of the recombining DNA molecules. The XerC-XerD complex is essential to convert dimers of the bacterial chromosome into monomers to permit their segregation at cell division. It also contributes to the segregational stability of plasmids. The polypeptide is Tyrosine recombinase XerC (Lacticaseibacillus paracasei (strain ATCC 334 / BCRC 17002 / CCUG 31169 / CIP 107868 / KCTC 3260 / NRRL B-441) (Lactobacillus paracasei)).